The primary structure comprises 233 residues: Large ribosomal subunit protein uL1 (233 aa).

Belongs to the universal ribosomal protein uL1 family. As to quaternary structure, part of the 50S ribosomal subunit.

Functionally, binds directly to 23S rRNA. The L1 stalk is quite mobile in the ribosome, and is involved in E site tRNA release. In terms of biological role, protein L1 is also a translational repressor protein, it controls the translation of the L11 operon by binding to its mRNA. This is Large ribosomal subunit protein uL1 from Campylobacter jejuni subsp. doylei (strain ATCC BAA-1458 / RM4099 / 269.97).